The chain runs to 710 residues: Iron-sulfur clusters transporter ATM1, mitochondrial (710 aa).

The N-terminal 38 residues, 1–38 (MWLSLPRSGYGSVATLTSKRVLACLTPLRQFSTSPAVS), are a transit peptide targeting the mitochondrion. Residues 35-52 (PAVSNANHKNVDNINKSP) show a composition bias toward polar residues. The disordered stretch occupies residues 35 to 83 (PAVSNANHKNVDNINKSPANDAANNAVEKGDKPTTSPEKLATKAEKSSA). Topologically, residues 39-129 (NANHKNVDNI…PKGKTSVKFR (91 aa)) are mitochondrial matrix. Residues 130 to 151 (VLVAVALLVGAKLLNVQVPFFF) traverse the membrane as a helical segment. The 290-residue stretch at 130–419 (VLVAVALLVG…LGSVYRDLRQ (290 aa)) folds into the ABC transmembrane type-1 domain. Topologically, residues 152–173 (KEIIDDMNIEWNSATALGVGIT) are mitochondrial intermembrane. A helical membrane pass occupies residues 174–197 (ALIFSYGAARFGAVLFGELRNAIF). Topologically, residues 198-246 (ASVAQKAIKEVATNVFRHLLKLDMAFHLSRQTGGITRAIDRGTKGISFV) are mitochondrial matrix. Residues 247-270 (LSSMVFHIIPIALEISLVCGILSY) traverse the membrane as a helical segment. Asparagine 271 is a topological domain (mitochondrial intermembrane). The helical transmembrane segment at 272-292 (FGWKYALVTGATMVSYAIFTI) threads the bilayer. The Mitochondrial matrix segment spans residues 293–358 (TTTSWRTKFR…ASIKIATSLA (66 aa)). Residues 298–302 (RTKFR) and 361–364 (NSGQ) each bind glutathione. The chain crosses the membrane as a helical span at residues 359 to 377 (FLNSGQNLIFSSALTAMMY). Residues 378-392 (MTCCGVADGSLTVGD) are Mitochondrial intermembrane-facing. The chain crosses the membrane as a helical span at residues 393–414 (LVLVNQLVFQLSVPLNFLGSVY). Glycine 411 contributes to the glutathione binding site. Residues 415-710 (RDLRQSLLDM…AEEKAAKKDV (296 aa)) are Mitochondrial matrix-facing. The 235-residue stretch at 453–687 (IRFENVTYGY…DGLYKSMWDA (235 aa)) folds into the ABC transporter domain. ATP contacts are provided by residues tyrosine 462 and 486–497 (GPSGSGKSTILK).

It belongs to the ABC transporter superfamily. ABCB family. Heavy Metal importer (TC 3.A.1.210) subfamily. In terms of assembly, homodimer.

The protein localises to the mitochondrion inner membrane. In terms of biological role, performs an essential function in the generation of cytoplasmic iron-sulfur proteins by mediating the ATP-dependent export of Fe/S cluster precursors synthesized by NFS1 and other mitochondrial proteins. Hydrolyzes ATP. Binds glutathione and may function by transporting a glutathione-conjugated iron-sulfur compound. The chain is Iron-sulfur clusters transporter ATM1, mitochondrial from Yarrowia lipolytica (strain CLIB 122 / E 150) (Yeast).